The following is a 575-amino-acid chain: Aspartate--tRNA ligase (575 aa).

Glu169 contacts L-aspartate. Positions Gln193–Lys196 are aspartate. L-aspartate is bound at residue Arg215. ATP-binding positions include Arg215–Glu217 and Gln224. Residue His438 coordinates L-aspartate. Glu472 is an ATP binding site. Residue Arg479 coordinates L-aspartate. Gly524 to Arg527 contacts ATP.

It belongs to the class-II aminoacyl-tRNA synthetase family. Type 1 subfamily. Homodimer.

The protein resides in the cytoplasm. The enzyme catalyses tRNA(Asp) + L-aspartate + ATP = L-aspartyl-tRNA(Asp) + AMP + diphosphate. Functionally, catalyzes the attachment of L-aspartate to tRNA(Asp) in a two-step reaction: L-aspartate is first activated by ATP to form Asp-AMP and then transferred to the acceptor end of tRNA(Asp). This chain is Aspartate--tRNA ligase, found in Mycoplasma capricolum subsp. capricolum (strain California kid / ATCC 27343 / NCTC 10154).